A 647-amino-acid polypeptide reads, in one-letter code: MIKFSATLLATLIAASVNAATVDLRIMETTDLHSNMMDFDYYKDTATEKFGLVRTASLIHAARNEVKNSVLVDNGDLIQGSPLGDYMAAKGLKDGDVHPVYKALNTLDYAVGNLGNHEFNYGLDYLHNALAGAKFPYVNANIIDVKTQKPLFTPYLIKETSVIDKDGNPQTLKIGYIGFVPPQIMIWDKANLSGKVTVNDITETARKYVPEMREKGADIVVVIAHSGLSADPYHSMAENSVYYLSEVPGVDAIMFGHAHAVFPGKDFADIKGADIAKGTLNGIPAVMPGMWGDHLGVVDLVLNNDSGKWQVTQAKAEARPIYDAAAKKSLAAEDSKLVGILKADHDATREFVSKPIGKSADNMYSYLALVQDDPTVQVVNNAQKAYVEHFIQGDPDLAKLPVLSAAAPFKVGGRKNDPASFVEVEKGQLTFRNAADLYLYPNTLVVVKASGKEVKEWLECSAGQFNQIDIHSNKPQSLINWDGFRTYNFDVIDGVNYQIDVSQPARYDGECQMVNPQAERIKNLTFNGKPVDPNATFLVATNNYRAYGGKFAGTGDSHIAFASPDENRAVLAAWIGAESKRAGEIHPAADNNWRLAPIHSDTALDIRFETSPGDKAAAFIKAKGQYPMKKVAVDDIGFAIYQVDLSK.

The N-terminal stretch at 1 to 19 (MIKFSATLLATLIAASVNA) is a signal peptide. A divalent metal cation-binding residues include Asp-31, His-33, Asp-76, Asn-116, His-225, His-257, and His-259. Substrate is bound by residues Tyr-440 and 544-550 (YRAYGGK).

Belongs to the 5'-nucleotidase family. A divalent metal cation is required as a cofactor.

It is found in the periplasm. The catalysed reaction is a nucleoside 2',3'-cyclic phosphate + H2O = a nucleoside 3'-phosphate + H(+). It catalyses the reaction a ribonucleoside 3'-phosphate + H2O = a ribonucleoside + phosphate. In terms of biological role, this bifunctional enzyme catalyzes two consecutive reactions during ribonucleic acid degradation. Converts a 2',3'-cyclic nucleotide to a 3'-nucleotide and then the 3'-nucleotide to the corresponding nucleoside and phosphate. This chain is 2',3'-cyclic-nucleotide 2'-phosphodiesterase/3'-nucleotidase (cpdB), found in Salmonella typhimurium (strain LT2 / SGSC1412 / ATCC 700720).